A 432-amino-acid chain; its full sequence is Adenylosuccinate synthetase (432 aa).

GTP is bound by residues 11 to 17 (GDEGKGK) and 39 to 41 (GHT). Residue aspartate 12 is the Proton acceptor of the active site. Mg(2+) contacts are provided by aspartate 12 and glycine 39. IMP is bound by residues 12-15 (DEGK), 37-40 (NAGH), threonine 134, arginine 148, asparagine 230, threonine 245, and arginine 309. Residue histidine 40 is the Proton donor of the active site. 305–311 (VTTGRKR) is a substrate binding site. GTP contacts are provided by residues arginine 311, 337 to 339 (KLD), and 419 to 421 (GTG).

The protein belongs to the adenylosuccinate synthetase family. Homodimer. The cofactor is Mg(2+).

Its subcellular location is the cytoplasm. It catalyses the reaction IMP + L-aspartate + GTP = N(6)-(1,2-dicarboxyethyl)-AMP + GDP + phosphate + 2 H(+). It participates in purine metabolism; AMP biosynthesis via de novo pathway; AMP from IMP: step 1/2. Functionally, plays an important role in the de novo pathway and in the salvage pathway of purine nucleotide biosynthesis. Catalyzes the first committed step in the biosynthesis of AMP from IMP. The protein is Adenylosuccinate synthetase of Vanderwaltozyma polyspora (strain ATCC 22028 / DSM 70294 / BCRC 21397 / CBS 2163 / NBRC 10782 / NRRL Y-8283 / UCD 57-17) (Kluyveromyces polysporus).